The sequence spans 535 residues: Phosphoenolpyruvate carboxykinase (ATP) (535 aa).

Substrate contacts are provided by R59, Y201, and K207. ATP is bound by residues K207, H226, and 243–251 (GLSGTGKTT). Residues K207 and H226 each coordinate Mn(2+). Residue D264 coordinates Mn(2+). ATP contacts are provided by residues E292, R328, 444–445 (RI), and T450. Residue R328 participates in substrate binding.

The protein belongs to the phosphoenolpyruvate carboxykinase (ATP) family. The cofactor is Mn(2+).

The protein resides in the cytoplasm. It catalyses the reaction oxaloacetate + ATP = phosphoenolpyruvate + ADP + CO2. The protein operates within carbohydrate biosynthesis; gluconeogenesis. Functionally, involved in the gluconeogenesis. Catalyzes the conversion of oxaloacetate (OAA) to phosphoenolpyruvate (PEP) through direct phosphoryl transfer between the nucleoside triphosphate and OAA. In Porphyromonas gingivalis (strain ATCC 33277 / DSM 20709 / CIP 103683 / JCM 12257 / NCTC 11834 / 2561), this protein is Phosphoenolpyruvate carboxykinase (ATP).